Reading from the N-terminus, the 200-residue chain is Small ribosomal subunit protein uS5 (200 aa).

Over residues 1 to 22 the composition is skewed to basic and acidic residues; sequence MAEERGEKRGRRRDRENPRDRD. The interval 1 to 26 is disordered; it reads MAEERGEKRGRRRDRENPRDRDDESS. Positions 28-91 constitute an S5 DRBM domain; the sequence is LVDKLVGINR…EEAKRNLVRI (64 aa).

The protein belongs to the universal ribosomal protein uS5 family. Part of the 30S ribosomal subunit. Contacts proteins S4 and S8.

With S4 and S12 plays an important role in translational accuracy. Functionally, located at the back of the 30S subunit body where it stabilizes the conformation of the head with respect to the body. This chain is Small ribosomal subunit protein uS5, found in Hyphomonas neptunium (strain ATCC 15444).